The sequence spans 295 residues: Protein shisa-2 homolog (295 aa).

An N-terminal signal peptide occupies residues 1 to 33 (MWGARRSSVSSSWNAASLLQLLLAALLAAGARA). Residues 34–110 (SGEYCHGWLD…RADKDGPDGS (77 aa)) are Extracellular-facing. Residues 87–108 (GCDNDRQQGAGEPGRADKDGPD) form a disordered region. Residues 111–131 (AVPIYVPFLIVGSVFVAFIIL) traverse the membrane as a helical segment. Topologically, residues 132-295 (GSLVAACCCR…EQKMYPAVTV (164 aa)) are cytoplasmic. Residues 168-205 (PSASTSRGSSSRQSSTAASSSSSANSGARAPPTRSQTN) are disordered. The span at 169–197 (SASTSRGSSSRQSSTAASSSSSANSGARA) shows a compositional bias: low complexity.

It belongs to the shisa family.

The protein localises to the endoplasmic reticulum membrane. Plays an essential role in the maturation of presomitic mesoderm cells by individual attenuation of both FGF and WNT signaling. The sequence is that of Protein shisa-2 homolog (SHISA2) from Homo sapiens (Human).